The primary structure comprises 430 residues: Adenylosuccinate synthetase (430 aa).

GTP contacts are provided by residues 12-18 (GDEGKGK) and 40-42 (GHT). The active-site Proton acceptor is aspartate 13. The Mg(2+) site is built by aspartate 13 and glycine 40. Residues 13-16 (DEGK), 38-41 (NAGH), threonine 130, arginine 144, glutamine 224, threonine 239, and arginine 303 each bind IMP. Histidine 41 functions as the Proton donor in the catalytic mechanism. 299-305 (TVTSRKR) is a substrate binding site. GTP is bound by residues arginine 305, 331-333 (KLD), and 413-415 (STS).

It belongs to the adenylosuccinate synthetase family. As to quaternary structure, homodimer. Requires Mg(2+) as cofactor.

Its subcellular location is the cytoplasm. It catalyses the reaction IMP + L-aspartate + GTP = N(6)-(1,2-dicarboxyethyl)-AMP + GDP + phosphate + 2 H(+). The protein operates within purine metabolism; AMP biosynthesis via de novo pathway; AMP from IMP: step 1/2. Its function is as follows. Plays an important role in the de novo pathway of purine nucleotide biosynthesis. Catalyzes the first committed step in the biosynthesis of AMP from IMP. This is Adenylosuccinate synthetase from Pelagibacter ubique (strain HTCC1062).